A 356-amino-acid polypeptide reads, in one-letter code: Cyclin-dependent kinase 5 activator 1 (356 aa).

Disordered stretches follow at residues 1 to 53 (MGAN…AKES) and 66 to 99 (IQPV…FTRN). Low complexity-rich tracts occupy residues 40–49 (SNTSSRSSSN) and 71–92 (SRRS…SSDS).

This sequence belongs to the cyclin-dependent kinase 5 activator family. In terms of assembly, heterodimer composed of a catalytic subunit cdk-5 and a regulatory subunit cdka-1. Interaction with cdka-1 is required for cdk-5 activation. As to expression, expressed in all classes of neurons in the ventral cord.

The protein localises to the cytoplasm. Its subcellular location is the cell projection. The protein resides in the dendrite. It localises to the axon. Functionally, activator of the kinase cdk-5. In several motor neurons, promotes the polarized trafficking of synaptic vesicles and dense-core vesicles. In the ventral nerve cord, regulates the synaptic localization of the glutamate receptor, glr-1. In DA motor neurons, regulates axonal transport of synaptic vesicle precursors by inhibiting dynein-mediated retrograde transport. Regulates the polarized distribution of dense-core vesicles in DB motor neurons. May regulate these processes in association with cdk-5. May also play a role in GABAergic synaptic vesicle localization in the ventral nerve cord. This Caenorhabditis elegans protein is Cyclin-dependent kinase 5 activator 1.